Consider the following 203-residue polypeptide: ATP-dependent Clp protease proteolytic subunit 2 (203 aa).

Serine 98 serves as the catalytic Nucleophile. Residue histidine 123 is part of the active site.

This sequence belongs to the peptidase S14 family. In terms of assembly, fourteen ClpP subunits assemble into 2 heptameric rings which stack back to back to give a disk-like structure with a central cavity, resembling the structure of eukaryotic proteasomes.

The protein localises to the cytoplasm. It carries out the reaction Hydrolysis of proteins to small peptides in the presence of ATP and magnesium. alpha-casein is the usual test substrate. In the absence of ATP, only oligopeptides shorter than five residues are hydrolyzed (such as succinyl-Leu-Tyr-|-NHMec, and Leu-Tyr-Leu-|-Tyr-Trp, in which cleavage of the -Tyr-|-Leu- and -Tyr-|-Trp bonds also occurs).. Cleaves peptides in various proteins in a process that requires ATP hydrolysis. Has a chymotrypsin-like activity. Plays a major role in the degradation of misfolded proteins. The chain is ATP-dependent Clp protease proteolytic subunit 2 from Chlamydia trachomatis serovar A (strain ATCC VR-571B / DSM 19440 / HAR-13).